The chain runs to 533 residues: Homeobox protein DTH-1 (533 aa).

Disordered regions lie at residues 1-28 (MSSN…NECP) and 308-378 (LPQN…GKKR). Positions 8–19 (VKYDTNFDREGY) are enriched in basic and acidic residues. The span at 308 to 317 (LPQNLPNPNQ) shows a compositional bias: low complexity. Residues 318–333 (TDSIYSSSINENNQPI) are compositionally biased toward polar residues. Low complexity predominate over residues 360 to 371 (SVENNDNENSSS). The segment at residues 377–436 (KRKRRVLFSKKQILELERHFRQKKYLSAPEREHLANLIGLSPTQVKIWFQNHRYKMKRAH) is a DNA-binding region (homeobox).

The protein belongs to the NK-2 homeobox family. Intestine and unidentified peripheral parenchymal cells. Slightly higher levels in the cephalic region compared to other body regions.

It localises to the nucleus. Functionally, this protein might be involved in determination and/or differentiation of nerve cells in the continuous replacement of neurons in the cephalic region. The chain is Homeobox protein DTH-1 (DTH-1) from Girardia tigrina (Planarian).